The following is a 327-amino-acid chain: Lipid phosphate phosphatase 1 (327 aa).

6 helical membrane passes run 51 to 71 (WIIL…SPFY), 93 to 113 (IWSV…CFYL), 118 to 138 (VYDL…TGVI), 187 to 207 (FPSG…LYLS), 217 to 237 (GHVA…LVGI), and 244 to 264 (WHHW…AAFC).

The protein belongs to the PA-phosphatase related phosphoesterase family. Strongly expressed in leaves, moderately in roots, weakly in floral hamps and flower buds, and not detected in adult flowers and seedpods.

It is found in the membrane. PA phosphatase activity inhibited by N-ethylmaleimide with an IC(50) value of 10 mM. Its function is as follows. Plays a general role in cellular responses to stress, may be by attenuating the signal produced by phospholipases. Exhibits both diacylglycerol pyrophosphate (DGPP) phosphatase and phosphatidate (PA) phosphatase activities. Substrate preference is diacylglycerol pyrophosphate &gt; phosphatidate. In Arabidopsis thaliana (Mouse-ear cress), this protein is Lipid phosphate phosphatase 1 (LPP1).